The chain runs to 238 residues: Sugar fermentation stimulation protein homolog (238 aa).

It belongs to the SfsA family.

This chain is Sugar fermentation stimulation protein homolog, found in Histophilus somni (strain 129Pt) (Haemophilus somnus).